A 500-amino-acid polypeptide reads, in one-letter code: NAD(P)H-quinone oxidoreductase chain 4, chloroplastic (500 aa).

A run of 14 helical transmembrane segments spans residues 4-24, 37-57, 87-107, 113-130, 134-154, 167-187, 211-231, 242-262, 274-294, 313-333, 334-354, 386-406, 417-437, and 462-482; these read FPWL…IFFL, ISIC…HFQL, LGSI…AWPI, LFYF…GLFS, LLLF…LLSM, FILY…GMGL, ILLY…IPLH, HYST…YGLI, YLFS…AALT, MGFI…GAIL, QILS…TASD, LALP…GLIT, LITF…LSML, and LFIL…PDFV.

Belongs to the complex I subunit 4 family.

It is found in the plastid. Its subcellular location is the chloroplast thylakoid membrane. It catalyses the reaction a plastoquinone + NADH + (n+1) H(+)(in) = a plastoquinol + NAD(+) + n H(+)(out). The catalysed reaction is a plastoquinone + NADPH + (n+1) H(+)(in) = a plastoquinol + NADP(+) + n H(+)(out). This chain is NAD(P)H-quinone oxidoreductase chain 4, chloroplastic (ndhD), found in Hordeum vulgare (Barley).